A 101-amino-acid polypeptide reads, in one-letter code: Large ribosomal subunit protein bL21 (101 aa).

This sequence belongs to the bacterial ribosomal protein bL21 family. As to quaternary structure, part of the 50S ribosomal subunit. Contacts protein L20.

This protein binds to 23S rRNA in the presence of protein L20. In Corynebacterium diphtheriae (strain ATCC 700971 / NCTC 13129 / Biotype gravis), this protein is Large ribosomal subunit protein bL21.